The following is a 660-amino-acid chain: Leucine-rich repeat transmembrane protein FLRT2 (660 aa).

Positions 1–35 (MGLQTTKWPGRGAFILKFWLIISLGLYLQVSKLLA) are cleaved as a signal peptide. Cystine bridges form between Cys-36–Cys-42 and Cys-40–Cys-49. The LRRNT domain occupies 36–63 (CPSVCRCDRNFVYCNERSLTSVPLGIPE). The Extracellular portion of the chain corresponds to 36–540 (CPSVCRCDRN…QTTSHSMGSP (505 aa)). LRR repeat units lie at residues 62-87 (PEGV…LHNV), 88-108 (QSVH…MNLP), 109-131 (KNVR…ALAQ), 132-157 (LLKL…AFRE), 159-181 (ISLK…LPVD), 183-202 (QELR…AFQN), 203-228 (LTSL…TFSH), 229-251 (LTKL…DLPG), 252-274 (THLI…AFAN), and 275-298 (LRKL…VFDH). A glycan (N-linked (GlcNAc...) asparagine) is linked at Asn-202. The region spanning 310–362 (NPWFCDCSIKWVTEWLKYIPSSLNVRGFMCQGPEQVRGMAVRELNMNLLSCPT) is the LRRCT domain. 2 cysteine pairs are disulfide-bonded: Cys-314-Cys-339 and Cys-316-Cys-360. The span at 371-396 (TPAPSTVSPTTQSPTLSVPSPSRGSV) shows a compositional bias: low complexity. The tract at residues 371–413 (TPAPSTVSPTTQSPTLSVPSPSRGSVPPAPTPSKLPTIPDWDG) is disordered. In terms of domain architecture, Fibronectin type-III spans 419–517 (PPISERIQLS…ICSEATTHAS (99 aa)). The chain crosses the membrane as a helical span at residues 541 to 561 (FLLAGLIGGAVIFVLVVLLSV). The Cytoplasmic segment spans residues 562-660 (FCWHMHKKGR…SVPDLEHCHT (99 aa)).

In terms of assembly, self-associates (via leucine-rich repeats), giving rise to homooligomers. Interacts with FGFR1. Interacts with FGFR2. Interacts (via extracellular domain) with ADGRL1/LPHN1. Interacts (via extracellular domain) with ADGRL3 (via olfactomedin-like domain). Interacts (via extracellular domain) with UNC5D (via the first Ig-like domain). Can also interact (via extracellular domain) with UNC5B, but with much lower affinity. Interacts (via extracellular domain) with FN1. N-glycosylated. In terms of processing, proteolytic cleavage in the juxtamembrane region gives rise to a soluble ectodomain. Cleavage is probably effected by a metalloprotease. As to expression, detected in adult brain (at protein level).

The protein resides in the cell membrane. Its subcellular location is the endoplasmic reticulum membrane. It is found in the cell junction. The protein localises to the focal adhesion. It localises to the secreted. The protein resides in the extracellular space. Its subcellular location is the extracellular matrix. It is found in the synapse. The protein localises to the synaptosome. It localises to the microsome membrane. Its function is as follows. Functions in cell-cell adhesion, cell migration and axon guidance. Mediates cell-cell adhesion via its interactions with ADGRL3 and probably also other latrophilins that are expressed at the surface of adjacent cells. May play a role in the migration of cortical neurons during brain development via its interaction with UNC5D. Mediates axon growth cone collapse and plays a repulsive role in neuron guidance via its interaction with UNC5D, and possibly also other UNC-5 family members. Plays a role in fibroblast growth factor-mediated signaling cascades. Required for normal organization of the cardiac basement membrane during embryogenesis, and for normal embryonic epicardium and heart morphogenesis. The protein is Leucine-rich repeat transmembrane protein FLRT2 of Mus musculus (Mouse).